The sequence spans 284 residues: 2-dehydro-3-deoxyphosphooctonate aldolase (284 aa).

This sequence belongs to the KdsA family.

It localises to the cytoplasm. The catalysed reaction is D-arabinose 5-phosphate + phosphoenolpyruvate + H2O = 3-deoxy-alpha-D-manno-2-octulosonate-8-phosphate + phosphate. It functions in the pathway carbohydrate biosynthesis; 3-deoxy-D-manno-octulosonate biosynthesis; 3-deoxy-D-manno-octulosonate from D-ribulose 5-phosphate: step 2/3. The protein operates within bacterial outer membrane biogenesis; lipopolysaccharide biosynthesis. This is 2-dehydro-3-deoxyphosphooctonate aldolase from Burkholderia orbicola (strain MC0-3).